The sequence spans 666 residues: DNA ligase (666 aa).

Residues 34–38 (DEEYD), 83–84 (SL), and E114 contribute to the NAD(+) site. Catalysis depends on K116, which acts as the N6-AMP-lysine intermediate. NAD(+) contacts are provided by R137, E174, K290, and K314. Zn(2+) contacts are provided by C408, C411, C424, and C429. Residues 584 to 666 (SIEGPLKGLT…LKMVKREHNG (83 aa)) form the BRCT domain.

Belongs to the NAD-dependent DNA ligase family. LigA subfamily. Mg(2+) is required as a cofactor. It depends on Mn(2+) as a cofactor.

It carries out the reaction NAD(+) + (deoxyribonucleotide)n-3'-hydroxyl + 5'-phospho-(deoxyribonucleotide)m = (deoxyribonucleotide)n+m + AMP + beta-nicotinamide D-nucleotide.. Its function is as follows. DNA ligase that catalyzes the formation of phosphodiester linkages between 5'-phosphoryl and 3'-hydroxyl groups in double-stranded DNA using NAD as a coenzyme and as the energy source for the reaction. It is essential for DNA replication and repair of damaged DNA. The polypeptide is DNA ligase (Coprothermobacter proteolyticus (strain ATCC 35245 / DSM 5265 / OCM 4 / BT)).